We begin with the raw amino-acid sequence, 203 residues long: NAD(P)H dehydrogenase (quinone) (203 aa).

A Flavodoxin-like domain is found at 3–194 (VLIAYYSMYG…AAARYQGKHV (192 aa)). FMN contacts are provided by residues 9 to 14 (SMYGHI) and 82 to 84 (TRF). Tyr11 contacts NAD(+). Trp102 is a substrate binding site. FMN is bound by residues 117–123 (SSATQHG) and His138.

The protein belongs to the WrbA family. FMN serves as cofactor.

It catalyses the reaction a quinone + NADH + H(+) = a quinol + NAD(+). The catalysed reaction is a quinone + NADPH + H(+) = a quinol + NADP(+). The polypeptide is NAD(P)H dehydrogenase (quinone) (Geotalea uraniireducens (strain Rf4) (Geobacter uraniireducens)).